The primary structure comprises 295 residues: Small ribosomal subunit protein uS3 (295 aa).

The KH type-2 domain occupies 39–107 (VREYLKKKLK…PVAVNIEEVR (69 aa)). A disordered region spans residues 213–295 (GTGAKMIEVA…AAAADGAKTE (83 aa)). The segment covering 224 to 245 (EERKPRGPRRDARPGDRPDRGA) has biased composition (basic and acidic residues). 2 stretches are compositionally biased toward low complexity: residues 246–255 (PRGAPRAPRG) and 283–295 (AAPA…AKTE).

It belongs to the universal ribosomal protein uS3 family. In terms of assembly, part of the 30S ribosomal subunit. Forms a tight complex with proteins S10 and S14.

Its function is as follows. Binds the lower part of the 30S subunit head. Binds mRNA in the 70S ribosome, positioning it for translation. This is Small ribosomal subunit protein uS3 from Polaromonas naphthalenivorans (strain CJ2).